The primary structure comprises 144 residues: Ribosome-binding factor A (144 aa).

A disordered region spans residues 120–144; it reads DKRRMAEAGREEDEAAPDDTTEDKA. Residues 129–144 show a composition bias toward acidic residues; sequence REEDEAAPDDTTEDKA.

The protein belongs to the RbfA family. As to quaternary structure, monomer. Binds 30S ribosomal subunits, but not 50S ribosomal subunits or 70S ribosomes.

Its subcellular location is the cytoplasm. Functionally, one of several proteins that assist in the late maturation steps of the functional core of the 30S ribosomal subunit. Associates with free 30S ribosomal subunits (but not with 30S subunits that are part of 70S ribosomes or polysomes). Required for efficient processing of 16S rRNA. May interact with the 5'-terminal helix region of 16S rRNA. The polypeptide is Ribosome-binding factor A (Aeromonas salmonicida (strain A449)).